Reading from the N-terminus, the 338-residue chain is Nuclear hormone receptor family member nhr-108 (338 aa).

Positions 7–82 form a DNA-binding region, nuclear receptor; that stretch reads NQPCMVCGEI…IGMLEKVVAS (76 aa). The NR C4-type zinc finger occupies 10-30; that stretch reads CMVCGEISYSIRFGAVSCRAC. The segment at 46–65 adopts an NR C4-type; degenerate zinc-finger fold; the sequence is KRCNGACDLGKYHRKTCQSC. The NR LBD domain occupies 92–338; that stretch reads NNQTILSGLE…QCPLYEATNE (247 aa).

Belongs to the nuclear hormone receptor family.

It localises to the nucleus. Orphan nuclear receptor. The protein is Nuclear hormone receptor family member nhr-108 (nhr-108) of Caenorhabditis elegans.